The following is a 479-amino-acid chain: Lactaldehyde dehydrogenase (479 aa).

Leu-150 lines the NAD(+) pocket. Residue Arg-161 coordinates (S)-lactate. NAD(+)-binding positions include 176 to 179, Gln-214, and Ser-230; that span reads KPSE. Glu-251 provides a ligand contact to (S)-lactate. Active-site residues include Glu-251 and Cys-285. Asn-286 is a binding site for (S)-lactate. Arg-336 serves as a coordination point for NAD(+). 2 residues coordinate (S)-lactate: Glu-443 and His-449.

It belongs to the aldehyde dehydrogenase family. Homotetramer.

It carries out the reaction (S)-lactaldehyde + NAD(+) + H2O = (S)-lactate + NADH + 2 H(+). The enzyme catalyses glycolaldehyde + NAD(+) + H2O = glycolate + NADH + 2 H(+). It functions in the pathway carbohydrate degradation; L-fucose degradation. Its pathway is carbohydrate degradation; L-rhamnose degradation. Its activity is regulated as follows. Substrate inhibition is very strong with lactaldehyde, diminishing progressively with glycolaldehyde, glyceraldehyde or methylglyoxal. Inhibited by p-hydroxy mercuribenzoate and by some cations, including Mn(2+), Ca(2+), Cu(2+) and Zn(2+). Inhibited by NADH. In terms of biological role, catalyzes the irreversible oxidation of L-lactaldehyde to L-lactate. Also shows high activity with glycolaldehyde and L-glyceraldehyde. Has weaker activity with various aldehydes such as methylglyoxal, propionaldehyde or benzaldehyde. Involved in the degradation of lactaldehyde produced during metabolism of L-fucose and L-rhamnose. It may be involved in several other metabolic pathways. The sequence is that of Lactaldehyde dehydrogenase (aldA) from Escherichia coli (strain K12).